Here is a 196-residue protein sequence, read N- to C-terminus: DPFMQALEQGLPAGVWTLAQVSQGRLDPEYRHHFYQATGWQEEVGLILPVRDGLTLMLFLGRLDKRSTLSRDELARLEGVFPLVHSLCRQQWQQSQPLLAQSTAQPDSTSLKSAVEQAMASVGGDRLTRRERQVAELLLQGLDTEAIAAALGIGNGTVKNHRKHLYGKLRLGSRAELFNLFLNHLITAPVGDIQTP.

Positions 120–185 (ASVGGDRLTR…ELFNLFLNHL (66 aa)) constitute an HTH luxR-type domain. Residues 144–163 (TEAIAAALGIGNGTVKNHRK) constitute a DNA-binding region (H-T-H motif).

The sequence is that of Putative HTH-type transcriptional regulator in exeN 3'region from Aeromonas salmonicida.